Consider the following 338-residue polypeptide: Anthocyanidin reductase ((2S)-flavan-3-ol-forming) (338 aa).

Residues 18–21 (TGFV), Lys-48, 87–90 (VATP), and Tyr-168 contribute to the NADP(+) site.

The protein belongs to the NAD(P)-dependent epimerase/dehydratase family. Dihydroflavonol-4-reductase subfamily.

The catalysed reaction is a (2S,3R)-flavan-3-ol + 2 NADP(+) = an anthocyanidin with a 3-hydroxy group + 2 NADPH + 2 H(+). It carries out the reaction a (2S,3S)-flavan-3-ol + 2 NADP(+) = an anthocyanidin with a 3-hydroxy group + 2 NADPH + 2 H(+). The protein operates within secondary metabolite biosynthesis; flavonoid biosynthesis. Produces the terminal flavan-3-ol monomers required for the formation of proanthocyanidins or condensed tannins in leaves and flowers, as well as in the skin and seeds of developing berries. Behaves as a reductase and as a C-3 epimerase. Catalyzes the double reduction of anthocyanidins, producing a mixture of (2S,3S)- and (2S,3R)-flavan-3-ols. The enzyme catalyzes sequential hydride transfers to C-2 and C-4, respectively and epimerization at C-3 is achieved by tautomerization that occurs between the two hydride transfers. Converts cyanidin, pelargonidin and delphinidin into catechin and epicatechin, afzelechin and epiafzelechin, and gallocatechin and epigallocatechin respectively. The polypeptide is Anthocyanidin reductase ((2S)-flavan-3-ol-forming) (Vitis vinifera (Grape)).